Consider the following 324-residue polypeptide: Mating-type protein A-3 (324 aa).

Residues 147-215 (TSRPRNQFVL…RHRAENPHLY (69 aa)) constitute a DNA-binding region (HMG box).

The protein resides in the nucleus. Required, together with mating-type protein A-2, for efficient ascospore formation. This Neurospora crassa (strain ATCC 24698 / 74-OR23-1A / CBS 708.71 / DSM 1257 / FGSC 987) protein is Mating-type protein A-3 (mtA-3).